A 216-amino-acid chain; its full sequence is L-fuculose phosphate aldolase (216 aa).

Residues 28-29 (GN), 43-44 (TG), and 71-72 (SS) each bind substrate. The Proton donor/acceptor role is filled by Glu73. 4 residues coordinate Zn(2+): Glu73, His92, His94, and His155.

The protein belongs to the aldolase class II family. AraD/FucA subfamily. Homotetramer. Zn(2+) serves as cofactor.

It catalyses the reaction L-fuculose 1-phosphate = (S)-lactaldehyde + dihydroxyacetone phosphate. Its pathway is carbohydrate degradation; L-fucose degradation; L-lactaldehyde and glycerone phosphate from L-fucose: step 3/3. Its function is as follows. Involved in the degradation of L-fucose and D-arabinose. Catalyzes the reversible cleavage of L-fuculose 1-phosphate (Fuc1P) to yield dihydroxyacetone phosphate (DHAP) and L-lactaldehyde. In Haemophilus influenzae (strain ATCC 51907 / DSM 11121 / KW20 / Rd), this protein is L-fuculose phosphate aldolase.